Reading from the N-terminus, the 325-residue chain is Tetraacyldisaccharide 4'-kinase (325 aa).

Position 55–62 (T55–T62) interacts with ATP.

Belongs to the LpxK family.

The catalysed reaction is a lipid A disaccharide + ATP = a lipid IVA + ADP + H(+). It participates in glycolipid biosynthesis; lipid IV(A) biosynthesis; lipid IV(A) from (3R)-3-hydroxytetradecanoyl-[acyl-carrier-protein] and UDP-N-acetyl-alpha-D-glucosamine: step 6/6. Functionally, transfers the gamma-phosphate of ATP to the 4'-position of a tetraacyldisaccharide 1-phosphate intermediate (termed DS-1-P) to form tetraacyldisaccharide 1,4'-bis-phosphate (lipid IVA). The protein is Tetraacyldisaccharide 4'-kinase of Enterobacter sp. (strain 638).